A 645-amino-acid chain; its full sequence is Acetyl-coenzyme A synthetase (645 aa).

CoA is bound by residues 190–193 (RGGK) and Thr-308. ATP contacts are provided by residues 384–386 (GEP), 408–413 (DTWWQT), Asp-497, and Arg-512. Ser-520 contributes to the CoA binding site. Arg-523 contributes to the ATP binding site. Residues Val-534, His-536, and Ile-539 each contribute to the Mg(2+) site. Lys-606 is subject to N6-acetyllysine.

Belongs to the ATP-dependent AMP-binding enzyme family. The cofactor is Mg(2+). In terms of processing, acetylated. Deacetylation by the SIR2-homolog deacetylase activates the enzyme.

The catalysed reaction is acetate + ATP + CoA = acetyl-CoA + AMP + diphosphate. Its function is as follows. Catalyzes the conversion of acetate into acetyl-CoA (AcCoA), an essential intermediate at the junction of anabolic and catabolic pathways. AcsA undergoes a two-step reaction. In the first half reaction, AcsA combines acetate with ATP to form acetyl-adenylate (AcAMP) intermediate. In the second half reaction, it can then transfer the acetyl group from AcAMP to the sulfhydryl group of CoA, forming the product AcCoA. This is Acetyl-coenzyme A synthetase from Alcanivorax borkumensis (strain ATCC 700651 / DSM 11573 / NCIMB 13689 / SK2).